Reading from the N-terminus, the 340-residue chain is HTH-type transcriptional regulator VirS (340 aa).

Residues 236–334 (ERVVGLARRL…GMTPRQYRAY (99 aa)) enclose the HTH araC/xylS-type domain. 2 consecutive DNA-binding regions (H-T-H motif) follow at residues 254-275 (EAIA…AAEG) and 301-324 (LSQI…RRWF).

Post-translationally, phosphorylated by PknK. Phosphorylation increases affinity for the mymA promoter.

Functionally, regulates the expression of the mymA operon. This Mycobacterium tuberculosis (strain CDC 1551 / Oshkosh) protein is HTH-type transcriptional regulator VirS (virS).